The following is a 625-amino-acid chain: MAATMNKTPATTFLLIPAAASLVLLLAAAASVEASAFDYAGAFDKCLLFFEAQRSGKLPDDRLVRWRGDSALTDGFSQGVDLVGGYYDSGDHVKFGLPMAYAVTMLSWGVVEFEKEMVDGNKLHRVLDAIRWGTNYFVKAHTQHNALWVQVGDGDSDHLCWERAEDMSTPRTAFKIDINNPGSEVAGETAAALAAAAKAFKPYDRMYSDLLLLHSKQLFTFADTFRGKYDDSLQSAKKFYPSASGYQDELLWAAAWLYEATGDEQYLRYVSQNAEAFGGTGWAVTEFSWDNKYAGLQVLLSKVLFEQGGSAAGYADTLKQYQAKAEFFLCACLQKNNGHNVKMTPGGLMYVSDWSNMQYVSSSAFLLTVYADYLAESRGTLRCPDGEVKPAEILRFARSQVDYVLGKNPKGMSYMVGYGSYYPTHVHHRGASIPSIYAMNATVGCMESFDKYYNSKNADPNVLHGALVGGPDANDAYDDDRCNYQHAEPTLAGNAPMSGVFARLAASPADNTPEYTPAPNAPSPSNGGSPLEFVHTVTNTWKANGVDYYRHVVTAKNTCGHAITYLKLQIKELSGEIYGVSRTNAKDMYEFPSWMTRLDAGAQLTIVYIQGGPAAKIAVVEYKTA.

An N-terminal signal peptide occupies residues 1 to 34 (MAATMNKTPATTFLLIPAAASLVLLLAAAASVEA). The active-site Nucleophile is aspartate 91. Residue histidine 427 is part of the active site. N-linked (GlcNAc...) asparagine glycosylation is present at asparagine 440. Active-site residues include aspartate 479 and glutamate 488. The interval 509 to 530 (ADNTPEYTPAPNAPSPSNGGSP) is disordered.

This sequence belongs to the glycosyl hydrolase 9 (cellulase E) family. As to expression, expressed in roots and flowers.

It localises to the secreted. It carries out the reaction Endohydrolysis of (1-&gt;4)-beta-D-glucosidic linkages in cellulose, lichenin and cereal beta-D-glucans.. The chain is Endoglucanase 13 (GLU6) from Oryza sativa subsp. japonica (Rice).